The following is a 239-amino-acid chain: Heptaprenylglyceryl phosphate synthase (239 aa).

K12 contacts sn-glycerol 1-phosphate. Residues D14 and T40 each coordinate Mg(2+). Sn-glycerol 1-phosphate is bound by residues 159–164 (YLEYSG), G189, and 209–210 (GN).

Belongs to the GGGP/HepGP synthase family. Group I subfamily. Homodimer. It depends on Mg(2+) as a cofactor.

The enzyme catalyses sn-glycerol 1-phosphate + all-trans-heptaprenyl diphosphate = 3-heptaprenyl-sn-glycero-1-phosphate + diphosphate. It functions in the pathway membrane lipid metabolism; glycerophospholipid metabolism. In terms of biological role, prenyltransferase that catalyzes in vivo the transfer of the heptaprenyl moiety of heptaprenyl pyrophosphate (HepPP; 35 carbon atoms) to the C3 hydroxyl of sn-glycerol-1-phosphate (G1P), producing heptaprenylglyceryl phosphate (HepGP). This reaction is an ether-bond-formation step in the biosynthesis of archaea-type G1P-based membrane lipids found in Bacillales. This Geobacillus thermodenitrificans (strain NG80-2) protein is Heptaprenylglyceryl phosphate synthase.